The primary structure comprises 541 residues: MKVATSALLIGAAAAQQQQILKFPDSFSELKESSWTKPLQNLEESLKSLTGEARATWDEIAMMFPESFEKAAFFSEPKPHTRKQDSEWDHIIKGADIQSVWVENEKGEKEREIDGKLEQYSLRAKKVDPSVLGVDKVKQYSGYLDDEEEDKHLFYWFFESRNDPKNDPVVLWLNGGPGCSSLTGLFMELGPASITKDQKIKHNPYSWNSNASVIFLDQPVNVGYSYSSGSVSNTVAAGKDIYALLTLFFKQFPEYSHQSFHISGESYAGHYIPVFASEILSHKNRNINLQSVLIGNGLTDGLTQYEYYRPMACGEGGWPAVLDESQCKAMDNAYPRCASLIENCYNSESVWSCVPASIYCNNAMIGPYQRTGQNVYDVRKPCGSNSLCYDELDWIQGYLNKKEVMKAVGAEVSNYESCNFDINRNFLLQGDWMKPFHRVVPGILEKIPVLIYAGDADYICNWLGNKAWTEALEWPGAKAYNQAKMEDFKIDGDGKTVGQVKSSGNFTFMRLHAGGHMVPYDQPEASLEMLNRWLGGGFWKA.

The signal sequence occupies residues 1-17 (MKVATSALLIGAAAAQQ). The propeptide occupies 18–125 (QQILKFPDSF…KLEQYSLRAK (108 aa)). Intrachain disulfides connect cysteine 179-cysteine 418, cysteine 313-cysteine 327, cysteine 337-cysteine 360, cysteine 344-cysteine 353, and cysteine 382-cysteine 388. N-linked (GlcNAc...) asparagine glycosylation occurs at asparagine 210. Serine 266 is a catalytic residue. The active site involves aspartate 457. N-linked (GlcNAc...) asparagine glycosylation occurs at asparagine 505. Histidine 516 is a catalytic residue.

This sequence belongs to the peptidase S10 family.

It localises to the vacuole. It catalyses the reaction Release of a C-terminal amino acid with broad specificity.. In terms of biological role, vacuolar carboxypeptidase involved in degradation of small peptides. Digests preferentially peptides containing an aliphatic or hydrophobic residue in P1' position, as well as methionine, leucine or phenylalanine in P1 position of ester substrate. The chain is Carboxypeptidase Y homolog A (cpyA) from Pyrenophora tritici-repentis (strain Pt-1C-BFP) (Wheat tan spot fungus).